A 1079-amino-acid polypeptide reads, in one-letter code: Isoleucine--tRNA ligase (1079 aa).

Residues 53 to 63 (PFANGLPHYGH) carry the 'HIGH' region motif. The short motif at 611-615 (KLSKR) is the 'KMSKS' region element. ATP is bound at residue Lys-614.

Belongs to the class-I aminoacyl-tRNA synthetase family. IleS type 2 subfamily. In terms of assembly, monomer. Zn(2+) is required as a cofactor.

It is found in the cytoplasm. It carries out the reaction tRNA(Ile) + L-isoleucine + ATP = L-isoleucyl-tRNA(Ile) + AMP + diphosphate. In terms of biological role, catalyzes the attachment of isoleucine to tRNA(Ile). As IleRS can inadvertently accommodate and process structurally similar amino acids such as valine, to avoid such errors it has two additional distinct tRNA(Ile)-dependent editing activities. One activity is designated as 'pretransfer' editing and involves the hydrolysis of activated Val-AMP. The other activity is designated 'posttransfer' editing and involves deacylation of mischarged Val-tRNA(Ile). The chain is Isoleucine--tRNA ligase from Rickettsia canadensis (strain McKiel).